The chain runs to 156 residues: Small ribosomal subunit protein uS7 (156 aa).

The protein belongs to the universal ribosomal protein uS7 family. In terms of assembly, part of the 30S ribosomal subunit. Contacts proteins S9 and S11.

Its function is as follows. One of the primary rRNA binding proteins, it binds directly to 16S rRNA where it nucleates assembly of the head domain of the 30S subunit. Is located at the subunit interface close to the decoding center, probably blocks exit of the E-site tRNA. The protein is Small ribosomal subunit protein uS7 of Staphylococcus saprophyticus subsp. saprophyticus (strain ATCC 15305 / DSM 20229 / NCIMB 8711 / NCTC 7292 / S-41).